A 150-amino-acid polypeptide reads, in one-letter code: Large ribosomal subunit protein uL15 (150 aa).

A disordered region spans residues 1 to 57 (MRLEDIRPQAGSTRRRRRLGRGVSAGQGASCGKGMRGQKARKGGSTRPGFEGGQTPL). Residues 23 to 35 (VSAGQGASCGKGM) are compositionally biased toward gly residues.

Belongs to the universal ribosomal protein uL15 family. Part of the 50S ribosomal subunit.

Functionally, binds to the 23S rRNA. The polypeptide is Large ribosomal subunit protein uL15 (Synechococcus sp. (strain JA-2-3B'a(2-13)) (Cyanobacteria bacterium Yellowstone B-Prime)).